A 41-amino-acid polypeptide reads, in one-letter code: Competence-stimulating peptide type 2 (41 aa).

Positions 1 to 24 (MKNTVKLEQFVALKEKDLQKIKGG) are excised as a propeptide.

The protein belongs to the ComC family.

The protein localises to the secreted. Acts as a pheromone, induces cells to develop competence for genetic transformation. The protein is Competence-stimulating peptide type 2 (comC2) of Streptococcus pneumoniae serotype 4 (strain ATCC BAA-334 / TIGR4).